The sequence spans 472 residues: Bifunctional protein HldE (472 aa).

Residues 1–315 form a ribokinase region; that stretch reads MAKRVKILVV…QLLNSSFGAN (315 aa). 192–195 lines the ATP pocket; the sequence is NKKE. The active site involves Asp260. Positions 340–472 are cytidylyltransferase; it reads FTNGCFDILH…IKDAKNDDKK (133 aa).

It in the N-terminal section; belongs to the carbohydrate kinase PfkB family. The protein in the C-terminal section; belongs to the cytidylyltransferase family. In terms of assembly, homodimer.

It catalyses the reaction D-glycero-beta-D-manno-heptose 7-phosphate + ATP = D-glycero-beta-D-manno-heptose 1,7-bisphosphate + ADP + H(+). The enzyme catalyses D-glycero-beta-D-manno-heptose 1-phosphate + ATP + H(+) = ADP-D-glycero-beta-D-manno-heptose + diphosphate. The protein operates within nucleotide-sugar biosynthesis; ADP-L-glycero-beta-D-manno-heptose biosynthesis; ADP-L-glycero-beta-D-manno-heptose from D-glycero-beta-D-manno-heptose 7-phosphate: step 1/4. It participates in nucleotide-sugar biosynthesis; ADP-L-glycero-beta-D-manno-heptose biosynthesis; ADP-L-glycero-beta-D-manno-heptose from D-glycero-beta-D-manno-heptose 7-phosphate: step 3/4. Catalyzes the phosphorylation of D-glycero-D-manno-heptose 7-phosphate at the C-1 position to selectively form D-glycero-beta-D-manno-heptose-1,7-bisphosphate. Its function is as follows. Catalyzes the ADP transfer from ATP to D-glycero-beta-D-manno-heptose 1-phosphate, yielding ADP-D-glycero-beta-D-manno-heptose. The chain is Bifunctional protein HldE from Campylobacter concisus (strain 13826).